We begin with the raw amino-acid sequence, 324 residues long: BURP domain-containing protein 5 (324 aa).

A signal peptide spans 1-30; it reads MCATLCTLLDEISILILMLLLIQLEIRVSA. The BURP domain occupies 109-323; that stretch reads FFLETNLQSS…QPDVVVWTRR (215 aa).

As to expression, expressed in panicles.

The chain is BURP domain-containing protein 5 (BURP5) from Oryza sativa subsp. japonica (Rice).